The primary structure comprises 244 residues: L-xylulose reductase (244 aa).

The residue at position 1 (Met1) is an N-acetylmethionine. Leu11–Arg39 contributes to the NADP(+) binding site. Residue Arg21 is modified to Omega-N-methylarginine. Residue Ser136 participates in substrate binding. Tyr149 (proton acceptor) is an active-site residue. The active site involves Lys153.

Belongs to the short-chain dehydrogenases/reductases (SDR) family. Homotetramer. As to expression, highly expressed in kidney, liver and epididymis. Expressed at intermediate level in lung. Weakly or not expressed in brain, heart, spleen and testis.

It is found in the membrane. Its subcellular location is the apical cell membrane. It catalyses the reaction xylitol + NADP(+) = L-xylulose + NADPH + H(+). In terms of biological role, catalyzes the NADPH-dependent reduction of several pentoses, tetroses, trioses, alpha-dicarbonyl compounds and L-xylulose. Participates in the uronate cycle of glucose metabolism. May play a role in the water absorption and cellular osmoregulation in the proximal renal tubules by producing xylitol, an osmolyte, thereby preventing osmolytic stress from occurring in the renal tubules. The protein is L-xylulose reductase (Dcxr) of Mus musculus (Mouse).